Consider the following 116-residue polypeptide: Iron-sulfur cluster insertion protein ErpA (116 aa).

Iron-sulfur cluster is bound by residues Cys44, Cys108, and Cys110.

The protein belongs to the HesB/IscA family. In terms of assembly, homodimer. The cofactor is iron-sulfur cluster.

Functionally, required for insertion of 4Fe-4S clusters for at least IspG. This Shewanella oneidensis (strain ATCC 700550 / JCM 31522 / CIP 106686 / LMG 19005 / NCIMB 14063 / MR-1) protein is Iron-sulfur cluster insertion protein ErpA.